The sequence spans 422 residues: Protein king tubby 2 (422 aa).

The interval 49–169 (PSNPDQIISS…ASGHNDAEGD (121 aa)) is disordered. The span at 57–81 (SSGSPTTVTATGTTTGSVTTTPTSP) shows a compositional bias: low complexity.

The protein belongs to the TUB family.

It is found in the cytoplasm. Its subcellular location is the nucleus. The polypeptide is Protein king tubby 2 (king-tubby2) (Culex quinquefasciatus (Southern house mosquito)).